The chain runs to 170 residues: VIP peptides (170 aa).

The N-terminal stretch at 1 to 21 (MEARSKPQFLAFLILFSVLFS) is a signal peptide. Residues 22-79 (QSLAWPLFGPPSVVRLDDRMPFEGAGDPDQVSLKADSDILQNPLAENGTPYYDVSRNA) constitute a propeptide that is removed on maturation. Ser76 carries the phosphoserine modification. An Isoleucine amide modification is found at Ile107. Asn133 is a glycosylation site (N-linked (GlcNAc...) asparagine). Asn152 bears the Asparagine amide mark. Residues 156–170 (SSEGDSADFLEELEK) constitute a propeptide that is removed on maturation.

This sequence belongs to the glucagon family.

It localises to the secreted. In terms of biological role, VIP is a neuropeptide involved in a diverse array of physiological processes through activating the PACAP subfamily of class B1 G protein-coupled receptors: VIP receptor 1 (VPR1) and VIP receptor 2 (VPR2). Abundantly expressed throughout the CNS and peripheral nervous systems where they primarily exert neuroprotective and immune modulatory roles. Also causes vasodilation, lowers arterial blood pressure, stimulates myocardial contractility, increases glycogenolysis and relaxes the smooth muscle of trachea, stomach and gall bladder. Functionally, PHM-27 and PHV-42 are two bioactive forms from proteolysis of the same precursor protein, that cause vasodilation. PHM-27 is a potent agonist of the calcitonin receptor CALCR, with similar efficacy as calcitonin. The chain is VIP peptides (Vip) from Mus musculus (Mouse).